The chain runs to 354 residues: Hyaluronan and proteoglycan link protein 1 (354 aa).

Residues Met1–Ala15 constitute a propeptide that is removed on maturation. 2 N-linked (GlcNAc...) asparagine glycosylation sites follow: Asn21 and Asn56. One can recognise an Ig-like V-type domain in the interval Pro38–Val152. Cystine bridges form between Cys61/Cys139, Cys181/Cys252, Cys205/Cys226, Cys279/Cys349, and Cys304/Cys325. 2 consecutive Link domains span residues Val159–Thr254 and Gly259–Arg351.

It belongs to the HAPLN family. Widely expressed. Weakly expressed in the brain.

The protein resides in the secreted. It localises to the extracellular space. Its subcellular location is the extracellular matrix. Its function is as follows. Stabilizes the aggregates of proteoglycan monomers with hyaluronic acid in the extracellular cartilage matrix. This is Hyaluronan and proteoglycan link protein 1 (HAPLN1) from Homo sapiens (Human).